Reading from the N-terminus, the 293-residue chain is Ribosomal protein L11 methyltransferase (293 aa).

S-adenosyl-L-methionine is bound by residues Thr145, Gly166, Asp188, and Asn230.

It belongs to the methyltransferase superfamily. PrmA family.

The protein localises to the cytoplasm. The enzyme catalyses L-lysyl-[protein] + 3 S-adenosyl-L-methionine = N(6),N(6),N(6)-trimethyl-L-lysyl-[protein] + 3 S-adenosyl-L-homocysteine + 3 H(+). Functionally, methylates ribosomal protein L11. In Serratia proteamaculans (strain 568), this protein is Ribosomal protein L11 methyltransferase.